Reading from the N-terminus, the 642-residue chain is MAGPPGEEVWRCLGCGDLIAAGQRLYRMVNEAWHISCFRCSECQDPLTNWYYEKDGKLYCHKDYWGKFGESCHGCSLLMTGPVMVAGEYKYHPECFACMSCKVIIEDGDTYALVQHSTLYCGKCHNQIVLTPMIEKHSTESLREQLPYTLTLISMPAATDGKRGFSVSVEGGCSSYATGVQVKEVNRMHISPDVRNAIHPADRILEINGAPIRTLQVEEVEDLIRKTSQTLQLLIEHDPVSQRLDRLRLDSRLPTHIKSPISPHSISPLDIKENLEGTLRRRSLRRSNSISKSPGPSSPKEPLLLSRDISRSESLRSSSSCSQQIFRPCDLIHGEVLGKGFFGQAIKVTHKATGKVMVMKELIRCDEETQKTFLTEVKVMRSLDHPNVLKFIGVLYKDKKLNLLTEYIEGGTLKDFLRNADPFPWQQKVSFAKGIASGMAYLHSMCIIHRDLNSHNCLIKLDKTVVVADFGLSRLIVEERKKPTLEKPSAKKRTLRKSDRKKRYTVVGNPYWMAPEMLNGQSYDETVDIFSFGIVLCEIIGQVYADPDCLPRTLDFGLNVKLFWEKFVPADCPPAFFPLAAICCRLEPESRPPFSKLEDSFEALSLYLGELAIPLPSELEELDHNVSVQYGLNRDKLPENTT.

LIM zinc-binding domains are found at residues 12-63 and 72-124; these read CLGC…CHKD and CHGC…CGKC. The region spanning 152–239 is the PDZ domain; that stretch reads LISMPAATDG…TLQLLIEHDP (88 aa). Positions 282–304 are disordered; sequence RSLRRSNSISKSPGPSSPKEPLL. Residues 286 to 304 show a composition bias toward low complexity; that stretch reads RSNSISKSPGPSSPKEPLL. Residues 331-608 form the Protein kinase domain; that stretch reads LIHGEVLGKG…DSFEALSLYL (278 aa). ATP contacts are provided by residues 337–345 and lysine 360; that span reads LGKGFFGQA. Aspartate 451 is an active-site residue. Residue threonine 505 is modified to Phosphothreonine.

It belongs to the protein kinase superfamily. TKL Ser/Thr protein kinase family. In terms of assembly, binds ROCK1 and LKAP. In terms of tissue distribution, expressed predominantly in the lung, and faintly in the kidney, liver, brain, spleen, gizzard, and intestine.

The protein localises to the cytoplasm. Its subcellular location is the cytoskeleton. It localises to the spindle. The protein resides in the microtubule organizing center. It is found in the centrosome. It catalyses the reaction L-seryl-[protein] + ATP = O-phospho-L-seryl-[protein] + ADP + H(+). It carries out the reaction L-threonyl-[protein] + ATP = O-phospho-L-threonyl-[protein] + ADP + H(+). Serine/threonine-protein kinase that plays an essential role in the regulation of actin filament dynamics. Acts downstream of several Rho family GTPase signal transduction pathways. Involved in astral microtubule organization and mitotic spindle orientation during early stages of mitosis by mediating phosphorylation of TPPP. The chain is LIM domain kinase 2 (LIMK2) from Gallus gallus (Chicken).